We begin with the raw amino-acid sequence, 292 residues long: Aquaporin-3 (292 aa).

Residues 1 to 24 (MGRQKELMNRCGEMLHIRYRLLRQ) are Cytoplasmic-facing. The chain crosses the membrane as a helical span at residues 25–42 (ALAECLGTLILVMFGCGS). Over 43–56 (VAQVVLSRGTHGGF) the chain is Extracellular. A helical membrane pass occupies residues 57–74 (LTINLAFGFAVTLGILVA). The Cytoplasmic portion of the chain corresponds to 75 to 78 (GQVS). Positions 79-92 (GAHLNPAVTFAMCF) form an intramembrane region, discontinuously helical. Positions 83 to 85 (NPA) match the NPA 1 motif. The Cytoplasmic segment spans residues 93-100 (LAREPWIK). The chain crosses the membrane as a helical span at residues 101–121 (LPIYALAQTLGAFLGAGIVFG). Residues 122–159 (LYYDAIWAFANNELFVSGPNGTAGIFATYPSGHLDMVN) lie on the Extracellular side of the membrane. Asn141 carries N-linked (GlcNAc...) asparagine glycosylation. Residues 160 to 177 (GFFDQFIGTAALIVCVLA) traverse the membrane as a helical segment. Residues 178 to 189 (IVDPYNNPVPRG) lie on the Cytoplasmic side of the membrane. A helical transmembrane segment spans residues 190–206 (LEAFTVGLVVLVIGTSM). Residues 207 to 210 (GFNS) lie on the Extracellular side of the membrane. The discontinuously helical intramembrane region spans 211-224 (GYAVNPARDFGPRL). An NPA 2 motif is present at residues 215–217 (NPA). Residues 225–242 (FTALAGWGSEVFTTGRHW) are Extracellular-facing. A helical membrane pass occupies residues 243–264 (WWVPIVSPLLGSIAGVFVYQLM). Topologically, residues 265-292 (IGCHLEQPPPSTEEENVKLAHMKHKEQI) are cytoplasmic.

The protein belongs to the MIP/aquaporin (TC 1.A.8) family. Homotetramer; each monomer provides an independent glycerol/water pore. Could also exist in other oligomeric states. As to expression, detected in principal cells in collecting ducts in kidney medulla (at protein level). Renal medulla and colon. Predominantly in the inner medulla. Expressed in basal layer of epidermal keratinocytes.

It localises to the cell membrane. The protein localises to the basolateral cell membrane. It carries out the reaction glycerol(in) = glycerol(out). The catalysed reaction is H2O(in) = H2O(out). It catalyses the reaction urea(in) = urea(out). The enzyme catalyses H2O2(out) = H2O2(in). Functionally, aquaglyceroporins form homotetrameric transmembrane channels, with each monomer independently mediating glycerol and water transport across the plasma membrane along their osmotic gradient. Could also be permeable to urea. Also participates in cell permeability to H2O2 and H2O2-mediated signaling. In skin, transports glycerol to the epidermis and stratum corneum, where it maintains hydration, elasticity, and supports lipid biosynthesis for barrier repair. In kidney, contributes to the reabsorption of water, helping the body maintain proper fluid balance. This is Aquaporin-3 from Mus musculus (Mouse).